The following is a 371-amino-acid chain: N-acetyldiaminopimelate deacetylase (371 aa).

The active site involves Asp68. The Proton acceptor role is filled by Glu127.

This sequence belongs to the peptidase M20A family. N-acetyldiaminopimelate deacetylase subfamily.

It catalyses the reaction N-acetyl-(2S,6S)-2,6-diaminopimelate + H2O = (2S,6S)-2,6-diaminopimelate + acetate. It participates in amino-acid biosynthesis; L-lysine biosynthesis via DAP pathway; LL-2,6-diaminopimelate from (S)-tetrahydrodipicolinate (acetylase route): step 3/3. Its function is as follows. Catalyzes the conversion of N-acetyl-diaminopimelate to diaminopimelate and acetate. The polypeptide is N-acetyldiaminopimelate deacetylase (Listeria welshimeri serovar 6b (strain ATCC 35897 / DSM 20650 / CCUG 15529 / CIP 8149 / NCTC 11857 / SLCC 5334 / V8)).